Reading from the N-terminus, the 230-residue chain is Cytidylate kinase (230 aa).

Gly12–Thr20 provides a ligand contact to ATP.

The protein belongs to the cytidylate kinase family. Type 1 subfamily.

It localises to the cytoplasm. The enzyme catalyses CMP + ATP = CDP + ADP. The catalysed reaction is dCMP + ATP = dCDP + ADP. The protein is Cytidylate kinase of Shewanella piezotolerans (strain WP3 / JCM 13877).